The primary structure comprises 622 residues: 1-deoxy-D-xylulose-5-phosphate synthase (622 aa).

Thiamine diphosphate is bound by residues H80 and 121–123; that span reads GHS. D152 lines the Mg(2+) pocket. Residues 153 to 154, N181, Y288, and E370 each bind thiamine diphosphate; that span reads GA. Residue N181 coordinates Mg(2+).

Belongs to the transketolase family. DXPS subfamily. Homodimer. Mg(2+) serves as cofactor. It depends on thiamine diphosphate as a cofactor.

The catalysed reaction is D-glyceraldehyde 3-phosphate + pyruvate + H(+) = 1-deoxy-D-xylulose 5-phosphate + CO2. Its pathway is metabolic intermediate biosynthesis; 1-deoxy-D-xylulose 5-phosphate biosynthesis; 1-deoxy-D-xylulose 5-phosphate from D-glyceraldehyde 3-phosphate and pyruvate: step 1/1. Catalyzes the acyloin condensation reaction between C atoms 2 and 3 of pyruvate and glyceraldehyde 3-phosphate to yield 1-deoxy-D-xylulose-5-phosphate (DXP). The sequence is that of 1-deoxy-D-xylulose-5-phosphate synthase from Shewanella denitrificans (strain OS217 / ATCC BAA-1090 / DSM 15013).